The sequence spans 206 residues: Transcriptional regulator GfcR (206 aa).

Belongs to the purine/pyrimidine phosphoribosyltransferase family. GfcR subfamily.

The protein is Transcriptional regulator GfcR of Methanosphaerula palustris (strain ATCC BAA-1556 / DSM 19958 / E1-9c).